The chain runs to 411 residues: Arginine deiminase (411 aa).

Residue Cys-401 is the Amidino-cysteine intermediate of the active site.

It belongs to the arginine deiminase family.

Its subcellular location is the cytoplasm. The catalysed reaction is L-arginine + H2O = L-citrulline + NH4(+). It participates in amino-acid degradation; L-arginine degradation via ADI pathway; carbamoyl phosphate from L-arginine: step 1/2. In Streptococcus equi subsp. zooepidemicus (strain MGCS10565), this protein is Arginine deiminase.